Reading from the N-terminus, the 414-residue chain is Paired box protein Pax-2 (414 aa).

Positions 15 to 141 form a DNA-binding region, paired; it reads RHGGVNQLGG…SSINRIIRTK (127 aa). The segment at 18 to 74 is PAI subdomain; the sequence is GVNQLGGVFVNGRPLPDVVRQRIVELAHQGVRPCDISRQLRVSHGCVSKILGRYYET. The interval 93–141 is RED subdomain; it reads KVVDKIAEYKRQNPTMFAWEIRDRLLAEGICDNDTVPSVSSINRIIRTK. Residue threonine 225 is modified to Phosphothreonine.

In terms of assembly, interacts with ELGN3; the interaction targets PAX2 for destruction. Interacts with TLE4. As to expression, kidney and nephrogenic rests.

It is found in the nucleus. Functionally, transcription factor that may have a role in kidney cell differentiation. The protein is Paired box protein Pax-2 (Pax2) of Mus musculus (Mouse).